The following is a 428-amino-acid chain: C4-dicarboxylate transport protein (428 aa).

A run of 9 helical transmembrane segments spans residues 4–24 (SLFK…ILLG), 44–64 (LIKM…IAGM), 76–96 (VALL…LIIV), 142–162 (IGAF…LFGF), 184–204 (VIFG…FGAM), 222–242 (LIIC…GTIA), 289–309 (VVGL…SIYL), 326–346 (IFHQ…AAGV), and 352–372 (IVLA…LALI).

Belongs to the dicarboxylate/amino acid:cation symporter (DAACS) (TC 2.A.23) family.

It localises to the cell inner membrane. Responsible for the transport of dicarboxylates such as succinate, fumarate, and malate from the periplasm across the membrane. In Salmonella arizonae (strain ATCC BAA-731 / CDC346-86 / RSK2980), this protein is C4-dicarboxylate transport protein.